Reading from the N-terminus, the 325-residue chain is L-lactate dehydrogenase (325 aa).

NAD(+) is bound by residues Val-19, Asp-40, Lys-45, Tyr-70, and 84 to 85 (GA). Positions 87 and 93 each coordinate substrate. Residues Thr-106, 123–125 (AAN), and Ser-148 contribute to the NAD(+) site. Position 125 to 128 (125 to 128 (NPVD)) interacts with substrate. Residue 153-156 (DSAR) coordinates substrate. Beta-D-fructose 1,6-bisphosphate-binding residues include Arg-158 and His-173. The Proton acceptor role is filled by His-180. Tyr-225 carries the post-translational modification Phosphotyrosine. Residue Thr-234 coordinates substrate.

Belongs to the LDH/MDH superfamily. LDH family. Homotetramer.

The protein resides in the cytoplasm. The enzyme catalyses (S)-lactate + NAD(+) = pyruvate + NADH + H(+). The protein operates within fermentation; pyruvate fermentation to lactate; (S)-lactate from pyruvate: step 1/1. With respect to regulation, allosterically activated by fructose 1,6-bisphosphate (FBP). In terms of biological role, catalyzes the conversion of lactate to pyruvate. The sequence is that of L-lactate dehydrogenase from Latilactobacillus sakei (Lactobacillus sakei).